A 210-amino-acid chain; its full sequence is Scoloptoxin SSD558 (210 aa).

The signal sequence occupies residues 1-23 (MNILLPSTLFVLLMFQIIGSGMG).

Contains 3 disulfide bonds. Expressed by the venom gland.

Its subcellular location is the secreted. This is Scoloptoxin SSD558 from Scolopendra dehaani (Thai centipede).